We begin with the raw amino-acid sequence, 1352 residues long: Alpha-protein kinase 1 (1352 aa).

An Arf-GAP domain is found at 7–127 (DPNYGLLRSL…RWTSSLSTSD (121 aa)). The C4-type zinc-finger motif lies at 25 to 48 (CAECNSANVPYVCIKLGVFICPTC). Disordered stretches follow at residues 123–164 (LSTS…NNNN), 219–380 (TQSQ…PQHH), 424–445 (QQQQ…NSEP), 457–484 (HNHH…GNNS), 503–560 (FVEE…GGVS), and 619–658 (IINN…TNQN). Positions 237–246 (GFSPFNSPRS) are enriched in polar residues. Composition is skewed to low complexity over residues 268–287 (NNSN…NNGN) and 298–318 (NNNN…NNNN). Composition is skewed to polar residues over residues 329-352 (KTFS…SGNS) and 359-379 (HPTQ…SPQH). Positions 393 to 429 (TTQQQLQQQQLQLQQQLQQQLQQQQQQQQQQQQQQQS) form a coiled coil. Composition is skewed to basic residues over residues 458–470 (NHHH…HHKQ) and 510–523 (HQHP…RHHS). The segment covering 619 to 636 (IINNQNNQNNNNNNNTNN) has biased composition (low complexity). Residues 689–781 (YIQQQQQQQQ…QQQQQQHINL (93 aa)) are a coiled coil. Disordered regions lie at residues 786-863 (PLQS…TDED) and 901-979 (TSPI…PDAR). A compositionally biased stretch (polar residues) spans 799-812 (PQHSSSQYMNQQGY). Over residues 821–859 (QPQSPQQIQPQPLQQQIFQQVQQQQPQIPQQSPQPLQSS) the composition is skewed to low complexity. Over residues 906 to 915 (QQPPQPPQPV) the composition is skewed to pro residues. The span at 931-965 (QQQNGPTVPQQQQQQQQQQQQQQQQQQQQQQQQQP) shows a compositional bias: low complexity. The region spanning 990–1194 (RFDAKLGKWV…ICHYLGLSSV (205 aa)) is the Alpha-type protein kinase domain. 1164-1169 (GKGNLG) contacts ATP. Disordered stretches follow at residues 1198-1234 (PAND…SFNF) and 1279-1352 (QQQQ…KLVS). The stretch at 1241–1320 (HVLEQLNQQQ…QQQQQQQQNG (80 aa)) forms a coiled coil. Residues 1279–1319 (QQQQQQQQQQQQQQQQNQQQNQQQNQQQQQQQQQQQQQQQN) show a composition bias toward low complexity. Over residues 1321–1332 (HPPPQTPLPPTP) the composition is skewed to pro residues. Basic and acidic residues predominate over residues 1334-1352 (QKDKPKIEVFGDILRKLVS).

The protein belongs to the protein kinase superfamily. Alpha-type protein kinase family. ALPK subfamily.

This is Alpha-protein kinase 1 (ak1) from Dictyostelium discoideum (Social amoeba).